The sequence spans 80 residues: Exodeoxyribonuclease 7 small subunit (80 aa).

Belongs to the XseB family. In terms of assembly, heterooligomer composed of large and small subunits.

Its subcellular location is the cytoplasm. It catalyses the reaction Exonucleolytic cleavage in either 5'- to 3'- or 3'- to 5'-direction to yield nucleoside 5'-phosphates.. Its function is as follows. Bidirectionally degrades single-stranded DNA into large acid-insoluble oligonucleotides, which are then degraded further into small acid-soluble oligonucleotides. The sequence is that of Exodeoxyribonuclease 7 small subunit from Vibrio cholerae serotype O1 (strain ATCC 39541 / Classical Ogawa 395 / O395).